Consider the following 269-residue polypeptide: Holocytochrome-c synthase (269 aa).

Positions 1 to 72 are disordered; the sequence is MGWFWADQKT…ASKQPGQKMD (72 aa). 2 HRM repeats span residues 25–30 and 41–46; these read GCPVMH and ECPVMQ.

This sequence belongs to the cytochrome c-type heme lyase family.

Its subcellular location is the mitochondrion inner membrane. It localises to the mitochondrion intermembrane space. The catalysed reaction is holo-[cytochrome c] = apo-[cytochrome c] + heme b. In terms of biological role, lyase that catalyzes the covalent linking of the heme group to the cytochrome C apoprotein to produce the mature functional cytochrome. This is Holocytochrome-c synthase (CYC3) from Saccharomyces cerevisiae (strain ATCC 204508 / S288c) (Baker's yeast).